We begin with the raw amino-acid sequence, 381 residues long: Transcriptional regulatory protein FlgR (381 aa).

Residues 2 to 113 (KIAIVEDDIN…LLLESIYRTK (112 aa)) enclose the Response regulatory domain. Residue aspartate 51 is modified to 4-aspartylphosphate. The 230-residue stretch at 136–365 (FLAASKALEE…LLGVVERAAI (230 aa)) folds into the Sigma-54 factor interaction domain. Residues 164–171 (GESGVGKE) and 227–236 (ANKGTIFLDE) contribute to the ATP site.

In terms of processing, phosphorylated by FlgS.

In terms of biological role, member of the two-component regulatory system FlgR/FlgS that induces the transcriptional induction of the genes needed in motility and flagellar biogenesis. Upon phosphorylation by FlgS, functions as a transcriptional regulator and activates transcription of RpoN-dependent flagellar genes. The sequence is that of Transcriptional regulatory protein FlgR (flgR) from Helicobacter pylori (strain ATCC 700392 / 26695) (Campylobacter pylori).